Consider the following 303-residue polypeptide: 2-phospho-L-lactate transferase (303 aa).

The 7,8-didemethyl-8-hydroxy-5-deazariboflavin site is built by D48 and K87.

The protein belongs to the CofD family. In terms of assembly, homodimer. Mg(2+) serves as cofactor.

It carries out the reaction (2S)-lactyl-2-diphospho-5'-guanosine + 7,8-didemethyl-8-hydroxy-5-deazariboflavin = oxidized coenzyme F420-0 + GMP + H(+). It functions in the pathway cofactor biosynthesis; coenzyme F420 biosynthesis. Its function is as follows. Catalyzes the transfer of the 2-phospholactate moiety from (2S)-lactyl-2-diphospho-5'-guanosine to 7,8-didemethyl-8-hydroxy-5-deazariboflavin (FO) with the formation of oxidized coenzyme F420-0 and GMP. This Methanosarcina mazei (strain ATCC BAA-159 / DSM 3647 / Goe1 / Go1 / JCM 11833 / OCM 88) (Methanosarcina frisia) protein is 2-phospho-L-lactate transferase.